The following is a 556-amino-acid chain: Methyltransferase/ribosomally synthesized type II borosin cyclic peptide precursor pgiMA1 (556 aa).

The tract at residues 1 to 250 (MSSASSDSNT…SCSTLYVPPL (250 aa)) is methyltransferase domain. Active-site residues include R74, Y78, and Y100. S-adenosyl-L-methionine contacts are provided by Y100, H102, V105, Q174, G212, S243, and T244. Residues 251-377 (THANKFSGNM…GAVFGVMKLR (127 aa)) are clasp domain. A precursor leader region spans residues 378-386 (ASEVANEQG). N-methylaspartate is present on residues D421, D434, D447, D460, D473, D486, D499, D512, D525, and D538. The propeptide occupies 543 to 556 (AVPVPDHVAGIPCM).

It in the N-terminal section; belongs to the precorrin methyltransferase family. As to quaternary structure, homodimer. In terms of processing, pgiMA1 automethylates at Asp-421, Asp-434, Asp-447, Asp-460, Asp-473, Asp-486, Asp-499, Asp-512, Asp-525 and Asp-538 before being processed, probably by the M64 family peptidase found in the genes surrounding PgiMA1, to release methylated peptides which then undergos macrocyclization with the N-terminus of the modified core peptides. Peptide backbone alpha-N-methylations change the physicochemical properties of amide bonds to provide structural constraints and other favorable characteristics including biological membrane permeability to peptides.

The protein operates within secondary metabolite biosynthesis. Fusion protein of the methyltransferase pgiM1 and 12 type II borosin core peptides; part of the gene cluster that mediates the biosynthesis of a type II borosin, a highly methylated cyclic peptide with potent biological activities. Type II borosins derive from the C-terminus of the fusion protein, and it is the same protein that methylates its own C-terminus using S-adenosyl methionine (SAM). The C-terminus is subsequently cleaved off and macrocyclized by a prolyloligopeptidase to give the final product. This chain is Methyltransferase/ribosomally synthesized type II borosin cyclic peptide precursor pgiMA1, found in Phlebiopsis gigantea (strain 11061_1 CR5-6) (White-rot fungus).